The sequence spans 413 residues: Putative competence-damage inducible protein (413 aa).

Belongs to the CinA family.

In Alkaliphilus oremlandii (strain OhILAs) (Clostridium oremlandii (strain OhILAs)), this protein is Putative competence-damage inducible protein.